A 1266-amino-acid chain; its full sequence is Phosphatidylinositol 3,4,5-trisphosphate 5-phosphatase 2A (1266 aa).

An SH2 domain is found at 15 to 111 (WMHRDLSRAA…GLVTTLLYPV (97 aa)). Residues 114-123 (EETTEDRDYS) show a composition bias toward basic and acidic residues. 2 disordered regions span residues 114–159 (EETT…NVTA) and 879–951 (DMGG…DATT). Positions 136–159 (TASTSSMTGSALVSTDTPPENVTA) are enriched in polar residues. Basic and acidic residues-rich tracts occupy residues 915–924 (RVSEEGEKSS) and 931–944 (TKEENTHNRGKQDP). The short motif at 958-961 (NPAY) is the NPXY motif element. Position 961 is a phosphotyrosine (Y961). Disordered stretches follow at residues 986–1132 (PLAN…SALD) and 1147–1174 (EVEYPSGRERGASQGPTGPQLRGLSFPS). Residues 994 to 1012 (PPAGSVGKSKPPSGSSAQG) show a composition bias toward low complexity. Positions 1045-1056 (RPPPDFPPPPLP) are enriched in pro residues. In terms of domain architecture, SAM spans 1203-1266 (SVDCSVGEWL…LLASLKQQQK (64 aa)).

This sequence belongs to the inositol 1,4,5-trisphosphate 5-phosphatase family. In terms of processing, tyrosine phosphorylated by the members of the SRC family after exposure to a diverse array of extracellular stimuli.

It localises to the cytoplasm. The protein resides in the cytosol. The protein localises to the cytoskeleton. It is found in the membrane. Its subcellular location is the cell projection. It localises to the filopodium. The protein resides in the lamellipodium. The protein localises to the nucleus. It is found in the nucleus speckle. It catalyses the reaction a 1,2-diacyl-sn-glycero-3-phospho-(1D-myo-inositol-3,4,5-trisphosphate) + H2O = a 1,2-diacyl-sn-glycero-3-phospho-(1D-myo-inositol-3,4-bisphosphate) + phosphate. Its function is as follows. Phosphatidylinositol (PtdIns) phosphatase that specifically hydrolyzes the 5-phosphate of phosphatidylinositol-3,4,5-trisphosphate (PtdIns(3,4,5)P3) to produce PtdIns(3,4)P2, thereby negatively regulating the PI3K (phosphoinositide 3-kinase) pathways. Plays a central role in regulation of PI3K-dependent insulin signaling, although the precise molecular mechanisms and signaling pathways remain unclear. Part of a signaling pathway that regulates actin cytoskeleton remodeling. Required for the maintenance and dynamic remodeling of actin structures as well as in endocytosis, having a major impact on ligand-induced EGFR internalization and degradation. Participates in regulation of cortical and submembraneous actin. Regulates cell adhesion and cell spreading. Acts as a negative regulator of the FC-gamma-RIIA receptor (FCGR2A). Mediates signaling from the FC-gamma-RIIB receptor (FCGR2B), playing a central role in terminating signal transduction from activating immune/hematopoietic cell receptor systems. May also hydrolyze PtdIns(1,3,4,5)P4, and could thus affect the levels of the higher inositol polyphosphates like InsP6. This is Phosphatidylinositol 3,4,5-trisphosphate 5-phosphatase 2A (inppl1a) from Danio rerio (Zebrafish).